Consider the following 246-residue polypeptide: NAD-dependent protein deacetylase (246 aa).

The 246-residue stretch at 1 to 246 (MKKPDIQQLK…VIEEIVNSNS (246 aa)) folds into the Deacetylase sirtuin-type domain. NAD(+)-binding residues include Ala-25, Phe-36, Arg-37, Gln-106, Ile-108, Asp-109, and His-124. Phe-36 lines the nicotinamide pocket. Nicotinamide is bound by residues Ile-108 and Asp-109. The active-site Proton acceptor is His-124. 4 residues coordinate Zn(2+): Cys-132, Cys-135, Cys-152, and Cys-155. The NAD(+) site is built by Ser-193, Ser-194, Asn-216, and Asp-233.

The protein belongs to the sirtuin family. Class U subfamily. The cofactor is Zn(2+).

It localises to the cytoplasm. It catalyses the reaction N(6)-acetyl-L-lysyl-[protein] + NAD(+) + H2O = 2''-O-acetyl-ADP-D-ribose + nicotinamide + L-lysyl-[protein]. In terms of biological role, NAD-dependent protein deacetylase which modulates the activities of several enzymes which are inactive in their acetylated form. The sequence is that of NAD-dependent protein deacetylase from Staphylococcus epidermidis (strain ATCC 12228 / FDA PCI 1200).